An 860-amino-acid polypeptide reads, in one-letter code: Leucine--tRNA ligase (860 aa).

The 'HIGH' region motif lies at 42–52 (PYPSGRLHMGH). The 'KMSKS' region motif lies at 619-623 (KMSKS). ATP is bound at residue K622.

This sequence belongs to the class-I aminoacyl-tRNA synthetase family.

Its subcellular location is the cytoplasm. The enzyme catalyses tRNA(Leu) + L-leucine + ATP = L-leucyl-tRNA(Leu) + AMP + diphosphate. The protein is Leucine--tRNA ligase of Yersinia pseudotuberculosis serotype I (strain IP32953).